The primary structure comprises 219 residues: Epididymal secretory glutathione peroxidase (219 aa).

The signal sequence occupies residues 1–21 (MTVQLGAFYLFPLFMAGFVQT). The active site involves Cys-71.

This sequence belongs to the glutathione peroxidase family. As to quaternary structure, homotetramer. As to expression, proximal caput epididymis.

It is found in the secreted. The catalysed reaction is 2 glutathione + H2O2 = glutathione disulfide + 2 H2O. May constitute a glutathione peroxidase-like protective system against peroxide damage in sperm membrane lipids. Since the purified porcine enzyme has very little activity towards hydrogen peroxide or organic hydroperoxides the protective effect is not likely to be exerted by its enzymatic activity. Instead, may protect sperm from premature acrosome reaction in the epididymis by binding to lipid peroxides, which might otherwise interact with phospholipase A2 and induce the acrosome reaction. This Sus scrofa (Pig) protein is Epididymal secretory glutathione peroxidase (GPX5).